A 607-amino-acid polypeptide reads, in one-letter code: Albumin (607 aa).

The signal sequence occupies residues 1–18 (MKWVTFVSLLFLFSSAYF). The propeptide occupies 19 to 24 (RGVLRR). Albumin domains are found at residues 19–209 (RGVL…DALK), 210–402 (ERIL…QFTP), and 403–600 (LVEE…KLVA). A Cu cation-binding site is contributed by His-27. The residue at position 29 (Ser-29) is a Phosphoserine. Residues Glu-30 and Asp-37 each contribute to the Ca(2+) site. Cysteines 77 and 86 form a disulfide. Residues Ser-82 and Ser-89 each carry the phosphoserine modification. His-91 contributes to the Zn(2+) binding site. Intrachain disulfides connect Cys-99–Cys-115, Cys-114–Cys-125, Cys-147–Cys-192, Cys-191–Cys-200, Cys-223–Cys-269, and Cys-268–Cys-276. Residue Thr-107 is modified to Phosphothreonine. Lys-228 is modified (N6-succinyllysine). Glu-267 serves as a coordination point for Ca(2+). Zn(2+) contacts are provided by His-270 and Asp-272. Residues Asp-272, Glu-275, Asp-278, and Asp-282 each coordinate Ca(2+). Intrachain disulfides connect Cys-288-Cys-302, Cys-301-Cys-312, Cys-339-Cys-384, Cys-383-Cys-392, Cys-415-Cys-461, Cys-460-Cys-471, Cys-484-Cys-500, and Cys-499-Cys-510. Ser-442 carries the phosphoserine modification. 2 positions are modified to phosphothreonine: Thr-443 and Thr-445. Ser-512 is subject to Phosphoserine. 2 disulfides stabilise this stretch: Cys-537/Cys-582 and Cys-581/Cys-590. The residue at position 557 (Lys-557) is an N6-methyllysine. Thr-569 carries the post-translational modification Phosphothreonine. Lys-587 is subject to N6-succinyllysine.

It belongs to the ALB/AFP/VDB family. As to quaternary structure, interacts with FCGRT; this interaction regulates ALB homeostasis. Interacts with TASOR. In plasma, occurs in a covalently-linked complex with chromophore-bound alpha-1-microglobulin; this interaction does not prevent fatty acid binding to ALB. In terms of processing, phosphorylated by FAM20C in the extracellular medium. Plasma.

Its subcellular location is the secreted. Functionally, binds water, Ca(2+), Na(+), K(+), fatty acids, hormones, bilirubin and drugs. Its main function is the regulation of the colloidal osmotic pressure of blood. Major zinc transporter in plasma, typically binds about 80% of all plasma zinc. Major calcium and magnesium transporter in plasma, binds approximately 45% of circulating calcium and magnesium in plasma. Potentially has more than two calcium-binding sites and might additionally bind calcium in a non-specific manner. The shared binding site between zinc and calcium at residue Asp-272 suggests a crosstalk between zinc and calcium transport in the blood. The rank order of affinity is zinc &gt; calcium &gt; magnesium. Binds to the bacterial siderophore enterobactin and inhibits enterobactin-mediated iron uptake of E.coli from ferric transferrin, and may thereby limit the utilization of iron and growth of enteric bacteria such as E.coli. Does not prevent iron uptake by the bacterial siderophore aerobactin. This chain is Albumin (ALB), found in Equus asinus (Donkey).